An 80-amino-acid polypeptide reads, in one-letter code: Caltrin (80 aa).

The signal sequence occupies residues 1 to 32; the sequence is MMAGRRSWPAMATVLLALLVCLGELVDSKPQP.

Its function is as follows. Inhibits calcium transport into spermatozoa; it does not bind directly to calcium. Binds to calmodulin. Inhibits the growth of microorganisms. Seem to act as an antibiotic by permeabilizing the bacterial membrane. This is Caltrin (PYY2) from Bos taurus (Bovine).